A 339-amino-acid polypeptide reads, in one-letter code: tRNA pseudouridine synthase D (339 aa).

The Nucleophile role is filled by Asp80. A TRUD domain is found at 155-311 (GFPNYFTEQR…AKGFSWAFEL (157 aa)).

This sequence belongs to the pseudouridine synthase TruD family.

The enzyme catalyses uridine(13) in tRNA = pseudouridine(13) in tRNA. Its function is as follows. Responsible for synthesis of pseudouridine from uracil-13 in transfer RNAs. This Haemophilus influenzae (strain PittEE) protein is tRNA pseudouridine synthase D.